The chain runs to 2362 residues: Filaggrin-2 (2362 aa).

An S-100-like region spans residues 1 to 81; sequence MAYLLRSVVT…TEFILMIFKL (81 aa). 2 EF-hand domains span residues 8-43 and 49-84; these read VVTI…EFRP and DDPD…LALA. Ca(2+) contacts are provided by Asp-62, Asp-64, Asp-66, Arg-68, and Glu-73. 2 disordered regions span residues 96 to 238 and 284 to 2109; these read ASGS…GLSC and GCCR…SSIP. Over residues 111-120 the composition is skewed to acidic residues; that stretch reads EESETEEEEE. Basic and acidic residues-rich tracts occupy residues 159 to 174 and 189 to 214; these read KRLE…EESR and NKEK…PSRE. Filaggrin repeat units follow at residues 261–308 and 373–414; these read GYNT…NQSC and HSSC…SNGF. 3 stretches are compositionally biased toward polar residues: residues 284–317, 342–375, and 383–395; these read GCCR…CQSG, SCSQ…SHSS, and GATQ…QQRM. The span at 396 to 411 shows a compositional bias: low complexity; sequence SSCGHSSSSHQKGCSS. 2 stretches are compositionally biased toward polar residues: residues 421–443 and 450–469; these read ASGS…SSGF and SGQS…SGYS. Composition is skewed to low complexity over residues 474 to 519, 539 to 550, and 567 to 580; these read GSGQ…QSSG, GSRQSSGSEQHG, and SQSS…SGSQ. The Filaggrin 3 repeat unit spans residues 555–607; that stretch reads QSSGSGKHETGPSQSSSSGHHGSGSQQHGGGSGQSTGFGEHESSSGHSSSSGQ. Residues 581–590 show a composition bias toward gly residues; that stretch reads QHGGGSGQST. The segment covering 599–618 has biased composition (low complexity); sequence SGHSSSSGQHRSGSRHSSGS. Over residues 632 to 653 the composition is skewed to gly residues; sequence GHHGSGSQQHGGGSGNSTGFGE. Positions 654–675 are enriched in low complexity; it reads HGSSSHPLPSSGQNESSSGQSS. One copy of the Filaggrin 4 repeat lies at 672-723; sequence GQSSRSERHGTGSGQSSGFGQHGSGSHQSSSSGHNEYGSGQTSSSWPHGKGS. The segment covering 682–694 has biased composition (gly residues); sequence TGSGQSSGFGQHG. Low complexity-rich tracts occupy residues 695–705, 728–754, and 780–798; these read SGSHQSSSSGH, GYGE…QSSS, and GYGE…WQHG. A compositionally biased stretch (gly residues) spans 826 to 838; sequence TGSGQSLGFGQHG. Low complexity predominate over residues 846–864; sequence SSGHYESVSEPSSSSWQHG. Residues 880–927 form a Filaggrin 5 repeat; it reads HGQSSSAWNHGNESGQSNGYGEHESGHGQSSSAWNHGNESGQSNGFGE. 2 stretches are compositionally biased toward polar residues: residues 886–896 and 912–925; these read AWNHGNESGQS and AWNH…SNGF. Basic and acidic residues predominate over residues 973 to 982; sequence ESSEGEEHSV. The Filaggrin 6 repeat unit spans residues 984–1035; sequence PRRYSGYGHGQGQAGHQQRESGYGQRGRPQGPSQDSSRQPQAGHGQPSQSGY. Residues 1014-1035 show a composition bias toward polar residues; sequence GPSQDSSRQPQAGHGQPSQSGY. A compositionally biased stretch (basic and acidic residues) spans 1047 to 1059; it reads EYSEGEAHSEVSQ. Basic residues predominate over residues 1067-1077; sequence CHCHCHGQARH. Residues 1104-1121 are compositionally biased toward low complexity; that stretch reads GPGQPSQSGSRRSPRSQP. Positions 1142-1152 are enriched in gly residues; that stretch reads SGHGHGQGQGQ. Polar residues predominate over residues 1162-1174; the sequence is HGQQGRPQGPSQD. One copy of the Filaggrin 7 repeat lies at 1165-1210; that stretch reads QGRPQGPSQDSSRQPQAGQGQPSQSGSGRSPRRSPVHPESSEGEEH. The segment covering 1175 to 1193 has biased composition (low complexity); it reads SSRQPQAGQGQPSQSGSGR. 3 positions are modified to phosphoserine: Ser-1198, Ser-1204, and Ser-1205. The span at 1220–1232 shows a compositional bias: gly residues; that stretch reads SGHGHGQGQGQGQ. Residues 1255–1273 are compositionally biased toward low complexity; it reads SSRQPQAGQGQPSQSGSGR. 3 positions are modified to phosphoserine: Ser-1278, Ser-1284, and Ser-1285. The stretch at 1280-1334 is one Filaggrin 8 repeat; sequence VHPESSEGEEHSVVPQRHSGSGHGHGQGQGQAGHQQRESVHGQPVRPEVPTQDSS. Positions 1300–1310 are enriched in gly residues; that stretch reads SGHGHGQGQGQ. A compositionally biased stretch (low complexity) spans 1333 to 1351; the sequence is SSRQPQAGQGQPSQSGSGR. Phosphoserine occurs at positions 1356, 1362, and 1363. Positions 1377 to 1396 are enriched in basic and acidic residues; sequence ESCHCHCHDQAGHQQRESVH. A compositionally biased stretch (low complexity) spans 1413–1436; it reads PQAGPGQPSQSGSRRSPRSSPVHP. A phosphoserine mark is found at Ser-1438 and Ser-1439. The span at 1454 to 1464 shows a compositional bias: gly residues; that stretch reads SGHGHGQGQGQ. The Filaggrin 9 repeat unit spans residues 1474-1522; sequence HGQRGRPQGPTQDSSRQPQAGQGQPSQSGSGRSPRRSPVHPESSEGEEH. Residues 1487 to 1505 show a composition bias toward low complexity; the sequence is SSRQPQAGQGQPSQSGSGR. Phosphoserine occurs at positions 1510, 1516, and 1517. Gly residues predominate over residues 1532 to 1544; that stretch reads SGHGHGHGQGQGQ. The span at 1567–1585 shows a compositional bias: low complexity; sequence SSRQPQAGQGQPSQSGSGR. Phosphoserine occurs at positions 1590, 1596, and 1597. Composition is skewed to low complexity over residues 1643 to 1661 and 1683 to 1696; these read SSRQ…GSGR and QRHS…GQGQ. A compositionally biased stretch (basic and acidic residues) spans 1698–1708; sequence HAEHQQRESVH. The Filaggrin 10 repeat unit spans residues 1723-1756; the sequence is RQPQAGQGQPSLSGSGRSPRRSPVHPESSEGEEH. The segment covering 1724–1739 has biased composition (low complexity); that stretch reads QPQAGQGQPSLSGSGR. Residues Ser-1744, Ser-1750, Ser-1751, Ser-1824, Ser-1830, and Ser-1831 each carry the phosphoserine modification. Over residues 1801-1825 the composition is skewed to low complexity; that stretch reads SSRQPQAGQGQPSQSGSGRSPGRSP. Residues 1829 to 1848 show a composition bias toward basic and acidic residues; that stretch reads ESSEGEEHSVVPQRHSESGH. The segment covering 1879-1897 has biased composition (low complexity); sequence SSRQPQAGQGQPSQSGSGR. Phosphoserine is present on residues Ser-1902, Ser-1908, and Ser-1909. Residues 1924–1934 show a composition bias toward gly residues; sequence SGHGHGQGQGQ. Residues 1949–1975 are compositionally biased toward low complexity; sequence RPQGPSQDSSSQPQASQGQPSQSGSGR. 3 positions are modified to phosphoserine: Ser-1980, Ser-1986, and Ser-1987. The span at 2002–2012 shows a compositional bias: gly residues; that stretch reads SGHGHGQGQGQ. One copy of the Filaggrin 11 repeat lies at 2016–2070; sequence QQRESLHGQRGRSQSPFHPSHSIHWQSKCTISKKSSRLSGHYGRNHFQSTISGNQ. 3 stretches are compositionally biased toward polar residues: residues 2026 to 2048, 2061 to 2079, and 2100 to 2109; these read GRSQ…TISK, HFQS…SSRH, and LRSNSQSSIP. A Phosphoserine modification is found at Ser-2104. One copy of the Filaggrin 12 repeat lies at 2218–2259; it reads DDSQYILFQKHLESPSFGNQSGFSPNERQLYTCNESIDSYHL.

This sequence belongs to the S100-fused protein family. It in the N-terminal section; belongs to the S-100 family. Post-translationally, deiminated by PADI1, PADI2 or PADI3 in vitro. The deiminated form is degraded by calpain-1/CAPN1 more quickly and into shorter peptides than the intact protein. In terms of processing, may be processed by calpain-1/CAPN1.

The protein resides in the cytoplasm. Its subcellular location is the cytoplasmic granule. Functionally, essential for normal cell-cell adhesion in the cornified cell layers. Important for proper integrity and mechanical strength of the stratum corneum of the epidermis. The chain is Filaggrin-2 (Flg2) from Mus musculus (Mouse).